A 491-amino-acid polypeptide reads, in one-letter code: Trigger factor (491 aa).

Positions 169-254 (GDRVTIDYLG…VKDVAAAAPI (86 aa)) constitute a PPIase FKBP-type domain. Positions 433–491 (KTVSKDELMAEDEAEDKPAKKAPAKKKAAAKAEAGEGEEAAAPKKKAPAKKKAADDSAE) are disordered. Positions 452–461 (KKAPAKKKAA) are enriched in basic residues.

This sequence belongs to the FKBP-type PPIase family. Tig subfamily.

It localises to the cytoplasm. The enzyme catalyses [protein]-peptidylproline (omega=180) = [protein]-peptidylproline (omega=0). Functionally, involved in protein export. Acts as a chaperone by maintaining the newly synthesized protein in an open conformation. Functions as a peptidyl-prolyl cis-trans isomerase. The polypeptide is Trigger factor (Sinorhizobium fredii (strain NBRC 101917 / NGR234)).